Here is a 105-residue protein sequence, read N- to C-terminus: ATP synthase subunit c (105 aa).

The next 2 membrane-spanning stretches (helical) occupy residues 32–52 (SILGAMIGLGIAAFGGAIGMG) and 78–98 (VAMAMIEAQVIYTLVFAIIAI).

Belongs to the ATPase C chain family. F-type ATPases have 2 components, F(1) - the catalytic core - and F(0) - the membrane proton channel. F(1) has five subunits: alpha(3), beta(3), gamma(1), delta(1), epsilon(1). F(0) has three main subunits: a(1), b(2) and c(10-14). The alpha and beta chains form an alternating ring which encloses part of the gamma chain. F(1) is attached to F(0) by a central stalk formed by the gamma and epsilon chains, while a peripheral stalk is formed by the delta and b chains.

The protein localises to the cell inner membrane. Its function is as follows. F(1)F(0) ATP synthase produces ATP from ADP in the presence of a proton or sodium gradient. F-type ATPases consist of two structural domains, F(1) containing the extramembraneous catalytic core and F(0) containing the membrane proton channel, linked together by a central stalk and a peripheral stalk. During catalysis, ATP synthesis in the catalytic domain of F(1) is coupled via a rotary mechanism of the central stalk subunits to proton translocation. Key component of the F(0) channel; it plays a direct role in translocation across the membrane. A homomeric c-ring of between 10-14 subunits forms the central stalk rotor element with the F(1) delta and epsilon subunits. This chain is ATP synthase subunit c, found in Helicobacter pylori (strain ATCC 700392 / 26695) (Campylobacter pylori).